An 82-amino-acid chain; its full sequence is Putative membrane protein insertion efficiency factor (82 aa).

Belongs to the UPF0161 family.

It localises to the cell inner membrane. In terms of biological role, could be involved in insertion of integral membrane proteins into the membrane. This is Putative membrane protein insertion efficiency factor from Aeromonas salmonicida (strain A449).